The chain runs to 156 residues: Probable cyclic pyranopterin monophosphate synthase (156 aa).

Substrate is bound by residues 74–76 and 110–111; these read LCH and ME. Asp125 is a catalytic residue.

This sequence belongs to the MoaC family. In terms of assembly, homohexamer; trimer of dimers.

The catalysed reaction is (8S)-3',8-cyclo-7,8-dihydroguanosine 5'-triphosphate = cyclic pyranopterin phosphate + diphosphate. The protein operates within cofactor biosynthesis; molybdopterin biosynthesis. In terms of biological role, catalyzes the conversion of (8S)-3',8-cyclo-7,8-dihydroguanosine 5'-triphosphate to cyclic pyranopterin monophosphate (cPMP). The chain is Probable cyclic pyranopterin monophosphate synthase from Thermococcus kodakarensis (strain ATCC BAA-918 / JCM 12380 / KOD1) (Pyrococcus kodakaraensis (strain KOD1)).